A 705-amino-acid chain; its full sequence is Elongation factor G (705 aa).

The 287-residue stretch at Asp8–Leu294 folds into the tr-type G domain. Residues Ala17–Thr24, Asp92–His96, and Asn146–Asp149 contribute to the GTP site.

Belongs to the TRAFAC class translation factor GTPase superfamily. Classic translation factor GTPase family. EF-G/EF-2 subfamily.

Its subcellular location is the cytoplasm. Functionally, catalyzes the GTP-dependent ribosomal translocation step during translation elongation. During this step, the ribosome changes from the pre-translocational (PRE) to the post-translocational (POST) state as the newly formed A-site-bound peptidyl-tRNA and P-site-bound deacylated tRNA move to the P and E sites, respectively. Catalyzes the coordinated movement of the two tRNA molecules, the mRNA and conformational changes in the ribosome. This chain is Elongation factor G, found in Dinoroseobacter shibae (strain DSM 16493 / NCIMB 14021 / DFL 12).